A 259-amino-acid polypeptide reads, in one-letter code: Deoxyribose-phosphate aldolase (259 aa).

Asp101 serves as the catalytic Proton donor/acceptor. Catalysis depends on Lys166, which acts as the Schiff-base intermediate with acetaldehyde. Lys200 serves as the catalytic Proton donor/acceptor.

This sequence belongs to the DeoC/FbaB aldolase family. DeoC type 2 subfamily.

The protein resides in the cytoplasm. The catalysed reaction is 2-deoxy-D-ribose 5-phosphate = D-glyceraldehyde 3-phosphate + acetaldehyde. It functions in the pathway carbohydrate degradation; 2-deoxy-D-ribose 1-phosphate degradation; D-glyceraldehyde 3-phosphate and acetaldehyde from 2-deoxy-alpha-D-ribose 1-phosphate: step 2/2. Its function is as follows. Catalyzes a reversible aldol reaction between acetaldehyde and D-glyceraldehyde 3-phosphate to generate 2-deoxy-D-ribose 5-phosphate. This chain is Deoxyribose-phosphate aldolase, found in Glaesserella parasuis serovar 5 (strain SH0165) (Haemophilus parasuis).